A 558-amino-acid chain; its full sequence is Laccase-10 (558 aa).

Positions 1–22 are cleaved as a signal peptide; the sequence is MVFPIRILVLFALLAFPACVHG. 2 consecutive Plastocyanin-like domains span residues 30-146 and 157-308; these read NVVT…PKLG and EEVI…YSGT. N-linked (GlcNAc...) asparagine glycosylation occurs at Asn-76. Residues His-80 and His-82 each coordinate Cu cation. Asn-112 carries an N-linked (GlcNAc...) asparagine glycan. Cu cation contacts are provided by His-125 and His-127. N-linked (GlcNAc...) asparagine glycans are attached at residues Asn-185, Asn-296, Asn-323, Asn-373, Asn-383, Asn-400, and Asn-441. In terms of domain architecture, Plastocyanin-like 3 spans 408-542; the sequence is DFPAKPRRVF…KMAFLVENGK (135 aa). Cu cation-binding residues include His-459, His-462, His-464, His-521, Cys-522, His-523, and His-527. Residue Asn-545 is glycosylated (N-linked (GlcNAc...) asparagine).

This sequence belongs to the multicopper oxidase family. The cofactor is Cu cation. In terms of tissue distribution, ubiquitous, with lower levels in siliques.

It localises to the secreted. The protein localises to the extracellular space. The protein resides in the apoplast. The catalysed reaction is 4 hydroquinone + O2 = 4 benzosemiquinone + 2 H2O. Its function is as follows. Lignin degradation and detoxification of lignin-derived products. The protein is Laccase-10 (LAC10) of Arabidopsis thaliana (Mouse-ear cress).